A 145-amino-acid chain; its full sequence is Bacilliredoxin MW1318 (145 aa).

Belongs to the bacilliredoxin family.

The chain is Bacilliredoxin MW1318 from Staphylococcus aureus (strain MW2).